The chain runs to 233 residues: Lactate utilization protein C (233 aa).

Belongs to the LutC/YkgG family.

Is involved in L-lactate degradation and allows cells to grow with lactate as the sole carbon source. This chain is Lactate utilization protein C, found in Oceanobacillus iheyensis (strain DSM 14371 / CIP 107618 / JCM 11309 / KCTC 3954 / HTE831).